A 92-amino-acid polypeptide reads, in one-letter code: Non-specific lipid-transfer protein A (92 aa).

Cystine bridges form between Cys3–Cys51, Cys13–Cys28, Cys29–Cys74, and Cys49–Cys88.

The protein belongs to the plant LTP family.

In terms of biological role, plant non-specific lipid-transfer proteins transfer phospholipids as well as galactolipids across membranes. May play a role in wax or cutin deposition in the cell walls of expanding epidermal cells and certain secretory tissues. This is Non-specific lipid-transfer protein A from Ricinus communis (Castor bean).